Reading from the N-terminus, the 309-residue chain is GATA transcription factor 25 (309 aa).

The segment at 1-35 (MFGRHSIIPNNQIGTASASAGEDHVSASATSGHIP) is disordered. Positions 8–18 (IPNNQIGTASA) are enriched in polar residues. The region spanning 77-112 (PPEGANQLTISFRGQVYVFDAVGADKVDAVLSLLGG) is the Tify domain. A CCT domain is found at 146–188 (RAQSLDRFRKKRNARCFEKKVRYGVRQEVALRMARNKGQFTSS). Residues 187–202 (SSKMTDGAYNSGTDQD) show a composition bias toward polar residues. Residues 187 to 207 (SSKMTDGAYNSGTDQDSAQDD) are disordered. The GATA-type zinc-finger motif lies at 208–267 (AHPEISCTHCGISSKCTPMMRRGPSGPRTLCNACGLFWANRGTLRDLSKKTEENQLALMK). The disordered stretch occupies residues 290–309 (EHTSMVSLANGDNSNLLGDH). Residues 293-309 (SMVSLANGDNSNLLGDH) are compositionally biased toward polar residues.

Belongs to the type IV zinc-finger family. Class C subfamily. As to expression, predominantly expressed in shoot apices, inflorescences and roots.

It is found in the nucleus. Its function is as follows. Transcriptional activator that specifically binds 5'-GATA-3' or 5'-GAT-3' motifs within gene promoters. This chain is GATA transcription factor 25 (GATA25), found in Arabidopsis thaliana (Mouse-ear cress).